The following is a 114-amino-acid chain: Iron-sulfur cluster insertion protein ErpA (114 aa).

Residues C42, C106, and C108 each contribute to the iron-sulfur cluster site.

This sequence belongs to the HesB/IscA family. As to quaternary structure, homodimer. Requires iron-sulfur cluster as cofactor.

Required for insertion of 4Fe-4S clusters for at least IspG. The sequence is that of Iron-sulfur cluster insertion protein ErpA from Enterobacter sp. (strain 638).